The sequence spans 478 residues: MKEKKLWGGRFDAAPSSLMIRIGESISFDQELYRHDIEGSISHSRMLRRIGILSESEQRKIETGLGQIKKEIDSGKFEFKIENEDIHMSIESRLTELLGDLGKKLHTGRSRNDQVSQDVRLYIKSEMHSILILVYDLLTVWLKKAEAHTKTIIPGYTHLQIAQPIRASHYFLSHFWANVRDFEDFYSAFERADELVLGSGALAGVNYETDREYLRKDLNLARMSENSMDAVSQRDHIFKFLFASSQFMVHASRFCEEIILYTSQEFSYFKLPDHLTTGSSIMPQKKNPDVAELIRGKAGRVIGNLTHLLVMLKGTPLSYNRDFQEDKIPLFDTVKQIKICTEGIRDMVEGIQIFPENATRSLRNGFSTATDLADWLVSAKGIPFRSAHEIVGELVKHCSMKGYDLFTIPSGERGQIHAVLTDPGYEAAISLETSCDKKDVFGGTALPRQKEQIKRAKAKLNELTKKLKQIESKGKKTI.

It belongs to the lyase 1 family. Argininosuccinate lyase subfamily.

Its subcellular location is the cytoplasm. The catalysed reaction is 2-(N(omega)-L-arginino)succinate = fumarate + L-arginine. The protein operates within amino-acid biosynthesis; L-arginine biosynthesis; L-arginine from L-ornithine and carbamoyl phosphate: step 3/3. This Leptospira biflexa serovar Patoc (strain Patoc 1 / Ames) protein is Argininosuccinate lyase.